A 225-amino-acid chain; its full sequence is Ribosome maturation factor RimM (225 aa).

Residues 144–225 (ADEFYWVDLI…RIVVDWEADY (82 aa)) form the PRC barrel domain.

Belongs to the RimM family. As to quaternary structure, binds ribosomal protein uS19.

The protein resides in the cytoplasm. An accessory protein needed during the final step in the assembly of 30S ribosomal subunit, possibly for assembly of the head region. Essential for efficient processing of 16S rRNA. May be needed both before and after RbfA during the maturation of 16S rRNA. It has affinity for free ribosomal 30S subunits but not for 70S ribosomes. This chain is Ribosome maturation factor RimM, found in Burkholderia vietnamiensis (strain G4 / LMG 22486) (Burkholderia cepacia (strain R1808)).